The chain runs to 614 residues: MPVLRSATSTQGRNMAGARALWRATGMKENDFGKPIIAVVNSFTQFVPGHVHLKDMGQLVAREIEKAGGVAKEFNTIAVDDGIAMGHGGMLYSLPSRDLIADSVEYMVNAHCADAMVCISNCDKITPGMLMAAMRLNIPTIFVSGGPMEAGKTKLSDKLIKLDLIDAMIQSADANVSDADVDVIEKSACPTCGACSGMFTANSMNCLTEALGLSLPGNGSMLATHADRKELFLEAGRKIVEICKRHYEQDDYSVLPRSIATFEAFENAMSLDIAMGGSSNTVLHLLAVAQEAGVDFKMADIDRLSRVVPCLSKIAPNTNKYHMEDVHRAGGIMGIVGELDRAGLIHRKVKTILGLTMEEQLNQYDIIRNKDEKLNKFFRAGPAGIRTTEAFSQDCRWDTVDDDRANGCIRDRAHAVTEEGGLAVLFGNIAEDGCIVKTAGVDESIWKFTGKAIVFESQEDAVAGILGGKVKEGHVVVIRYEGPKGGPGMQEMLYPTSYLKSMGLGKKCALLTDGRFSGGTSGLSIGHASPEAASGGAIGLVNNDDIIEIDIPNRAINLVLPDEELAVRRAAMEAKGARAWQPENRRREVSTALKIFGHFATSADKGAVRDKTKL.

Asp81 lines the Mg(2+) pocket. Cys122 provides a ligand contact to [2Fe-2S] cluster. Mg(2+) is bound by residues Asp123 and Lys124. N6-carboxylysine is present on Lys124. A [2Fe-2S] cluster-binding site is contributed by Cys195. Glu491 provides a ligand contact to Mg(2+). Residue Ser517 is the Proton acceptor of the active site.

This sequence belongs to the IlvD/Edd family. In terms of assembly, homodimer. [2Fe-2S] cluster is required as a cofactor. Requires Mg(2+) as cofactor.

The enzyme catalyses (2R)-2,3-dihydroxy-3-methylbutanoate = 3-methyl-2-oxobutanoate + H2O. It catalyses the reaction (2R,3R)-2,3-dihydroxy-3-methylpentanoate = (S)-3-methyl-2-oxopentanoate + H2O. Its pathway is amino-acid biosynthesis; L-isoleucine biosynthesis; L-isoleucine from 2-oxobutanoate: step 3/4. The protein operates within amino-acid biosynthesis; L-valine biosynthesis; L-valine from pyruvate: step 3/4. Functionally, functions in the biosynthesis of branched-chain amino acids. Catalyzes the dehydration of (2R,3R)-2,3-dihydroxy-3-methylpentanoate (2,3-dihydroxy-3-methylvalerate) into 2-oxo-3-methylpentanoate (2-oxo-3-methylvalerate) and of (2R)-2,3-dihydroxy-3-methylbutanoate (2,3-dihydroxyisovalerate) into 2-oxo-3-methylbutanoate (2-oxoisovalerate), the penultimate precursor to L-isoleucine and L-valine, respectively. The chain is Dihydroxy-acid dehydratase from Actinobacillus succinogenes (strain ATCC 55618 / DSM 22257 / CCUG 43843 / 130Z).